The following is a 185-amino-acid chain: MINEIKKDTQQRMEKSLETLRTHIAKIRTGRAQPSLLDGIQVEYYGSPTPLRQLANVVAEDARTLAVTVFDRSLISAVEKAILTSDLGLNPSSAGTTIRVPLPPLTEERRRDLIKIVKGEGEQGKIAIRNVRRDANDQIKALLKDKEISEDEERKAQDEIQKITDTFVKKVDEILADKEKELLDF.

This sequence belongs to the RRF family.

The protein resides in the cytoplasm. Functionally, responsible for the release of ribosomes from messenger RNA at the termination of protein biosynthesis. May increase the efficiency of translation by recycling ribosomes from one round of translation to another. The chain is Ribosome-recycling factor from Histophilus somni (strain 2336) (Haemophilus somnus).